The primary structure comprises 177 residues: Small ribosomal subunit protein uS4 (177 aa).

Residues 104–168 enclose the S4 RNA-binding domain; that stretch reads RRLQTLVFRK…SPMASESHPE (65 aa). A disordered region spans residues 157-177; the sequence is PNSPMASESHPERTDSVKDAE. Residues 165–177 are compositionally biased toward basic and acidic residues; it reads SHPERTDSVKDAE.

The protein belongs to the universal ribosomal protein uS4 family. Part of the 30S ribosomal subunit. Contacts protein S5. The interaction surface between S4 and S5 is involved in control of translational fidelity.

Its function is as follows. One of the primary rRNA binding proteins, it binds directly to 16S rRNA where it nucleates assembly of the body of the 30S subunit. In terms of biological role, with S5 and S12 plays an important role in translational accuracy. This Methanococcus aeolicus (strain ATCC BAA-1280 / DSM 17508 / OCM 812 / Nankai-3) protein is Small ribosomal subunit protein uS4.